A 140-amino-acid polypeptide reads, in one-letter code: ATP synthase epsilon chain (140 aa).

The protein belongs to the ATPase epsilon chain family. As to quaternary structure, F-type ATPases have 2 components, CF(1) - the catalytic core - and CF(0) - the membrane proton channel. CF(1) has five subunits: alpha(3), beta(3), gamma(1), delta(1), epsilon(1). CF(0) has three main subunits: a, b and c.

It localises to the cell inner membrane. Its function is as follows. Produces ATP from ADP in the presence of a proton gradient across the membrane. The sequence is that of ATP synthase epsilon chain from Vibrio parahaemolyticus serotype O3:K6 (strain RIMD 2210633).